The chain runs to 138 residues: Transcription antitermination protein NusB (138 aa).

Belongs to the NusB family.

In terms of biological role, involved in transcription antitermination. Required for transcription of ribosomal RNA (rRNA) genes. Binds specifically to the boxA antiterminator sequence of the ribosomal RNA (rrn) operons. The chain is Transcription antitermination protein NusB from Leptospira borgpetersenii serovar Hardjo-bovis (strain JB197).